The chain runs to 456 residues: Cysteine--tRNA ligase (456 aa).

Residue Cys-28 coordinates Zn(2+). A 'HIGH' region motif is present at residues Met-30–His-40. Zn(2+) contacts are provided by Cys-209, His-234, and Glu-238. Residues Lys-266–Ser-270 carry the 'KMSKS' region motif. Lys-269 is a binding site for ATP.

Belongs to the class-I aminoacyl-tRNA synthetase family. As to quaternary structure, monomer. Requires Zn(2+) as cofactor.

It localises to the cytoplasm. The enzyme catalyses tRNA(Cys) + L-cysteine + ATP = L-cysteinyl-tRNA(Cys) + AMP + diphosphate. The polypeptide is Cysteine--tRNA ligase (Dechloromonas aromatica (strain RCB)).